The sequence spans 48 residues: ATP synthase protein 8 (48 aa).

Residues 13–32 (LVYGFALVTILLVLFAQYFL) traverse the membrane as a helical segment.

The protein belongs to the ATPase protein 8 family. As to quaternary structure, F-type ATPases have 2 components, CF(1) - the catalytic core - and CF(0) - the membrane proton channel.

It localises to the mitochondrion membrane. Mitochondrial membrane ATP synthase (F(1)F(0) ATP synthase or Complex V) produces ATP from ADP in the presence of a proton gradient across the membrane which is generated by electron transport complexes of the respiratory chain. F-type ATPases consist of two structural domains, F(1) - containing the extramembraneous catalytic core and F(0) - containing the membrane proton channel, linked together by a central stalk and a peripheral stalk. During catalysis, ATP synthesis in the catalytic domain of F(1) is coupled via a rotary mechanism of the central stalk subunits to proton translocation. Part of the complex F(0) domain. Minor subunit located with subunit a in the membrane. The polypeptide is ATP synthase protein 8 (ATP8) (Kluyveromyces lactis (strain ATCC 8585 / CBS 2359 / DSM 70799 / NBRC 1267 / NRRL Y-1140 / WM37) (Yeast)).